The chain runs to 247 residues: Uridylate kinase (247 aa).

Position 11–14 (11–14 (KASG)) interacts with ATP. The involved in allosteric activation by GTP stretch occupies residues 19–24 (GKQGFG). Gly-53 lines the UMP pocket. Positions 54 and 58 each coordinate ATP. Residues Asp-73 and 134-141 (TGNPFFTT) each bind UMP. Residues Thr-161, Gln-162, Tyr-167, and Asp-170 each coordinate ATP.

Belongs to the UMP kinase family. Homohexamer.

The protein localises to the cytoplasm. It carries out the reaction UMP + ATP = UDP + ADP. Its pathway is pyrimidine metabolism; CTP biosynthesis via de novo pathway; UDP from UMP (UMPK route): step 1/1. Allosterically activated by GTP. Inhibited by UTP. Its function is as follows. Catalyzes the reversible phosphorylation of UMP to UDP. The chain is Uridylate kinase from Chelativorans sp. (strain BNC1).